Reading from the N-terminus, the 484-residue chain is tRNA sulfurtransferase (484 aa).

Positions 61 to 165 (PLILDLLKRT…GDKMLLVEAR (105 aa)) constitute a THUMP domain. ATP is bound by residues 183 to 184 (LI), K265, G287, and Q296. An intrachain disulfide couples C344 to C456. The 80-residue stretch at 404–483 (LTEKDIILDI…YQNVKVFNLP (80 aa)) folds into the Rhodanese domain. C456 acts as the Cysteine persulfide intermediate in catalysis.

Belongs to the ThiI family.

The protein resides in the cytoplasm. It catalyses the reaction [ThiI sulfur-carrier protein]-S-sulfanyl-L-cysteine + a uridine in tRNA + 2 reduced [2Fe-2S]-[ferredoxin] + ATP + H(+) = [ThiI sulfur-carrier protein]-L-cysteine + a 4-thiouridine in tRNA + 2 oxidized [2Fe-2S]-[ferredoxin] + AMP + diphosphate. The catalysed reaction is [ThiS sulfur-carrier protein]-C-terminal Gly-Gly-AMP + S-sulfanyl-L-cysteinyl-[cysteine desulfurase] + AH2 = [ThiS sulfur-carrier protein]-C-terminal-Gly-aminoethanethioate + L-cysteinyl-[cysteine desulfurase] + A + AMP + 2 H(+). It functions in the pathway cofactor biosynthesis; thiamine diphosphate biosynthesis. Functionally, catalyzes the ATP-dependent transfer of a sulfur to tRNA to produce 4-thiouridine in position 8 of tRNAs, which functions as a near-UV photosensor. Also catalyzes the transfer of sulfur to the sulfur carrier protein ThiS, forming ThiS-thiocarboxylate. This is a step in the synthesis of thiazole, in the thiamine biosynthesis pathway. The sulfur is donated as persulfide by IscS. This is tRNA sulfurtransferase from Haemophilus ducreyi (strain 35000HP / ATCC 700724).